The chain runs to 430 residues: Glutamate-1-semialdehyde 2,1-aminomutase (430 aa).

N6-(pyridoxal phosphate)lysine is present on Lys-265.

This sequence belongs to the class-III pyridoxal-phosphate-dependent aminotransferase family. HemL subfamily. Homodimer. Pyridoxal 5'-phosphate serves as cofactor.

The protein localises to the cytoplasm. It catalyses the reaction (S)-4-amino-5-oxopentanoate = 5-aminolevulinate. It functions in the pathway porphyrin-containing compound metabolism; protoporphyrin-IX biosynthesis; 5-aminolevulinate from L-glutamyl-tRNA(Glu): step 2/2. This is Glutamate-1-semialdehyde 2,1-aminomutase from Shewanella sp. (strain ANA-3).